We begin with the raw amino-acid sequence, 171 residues long: Transcription antitermination protein NusB (171 aa).

The protein belongs to the NusB family.

Functionally, involved in transcription antitermination. Required for transcription of ribosomal RNA (rRNA) genes. Binds specifically to the boxA antiterminator sequence of the ribosomal RNA (rrn) operons. The polypeptide is Transcription antitermination protein NusB (Pelodictyon phaeoclathratiforme (strain DSM 5477 / BU-1)).